The primary structure comprises 395 residues: Tryptophan--tRNA ligase, cytoplasmic (395 aa).

The 'HIGH' region motif lies at 91–100 (PSSDSMHLGH). A 'KMSKS' region motif is present at residues 275 to 279 (KMSAS). Residues Thr-288 and Thr-290 each carry the phosphothreonine modification.

Belongs to the class-I aminoacyl-tRNA synthetase family.

The protein localises to the cytoplasm. It carries out the reaction tRNA(Trp) + L-tryptophan + ATP = L-tryptophyl-tRNA(Trp) + AMP + diphosphate + H(+). This is Tryptophan--tRNA ligase, cytoplasmic (wrs1) from Schizosaccharomyces pombe (strain 972 / ATCC 24843) (Fission yeast).